The sequence spans 174 residues: Ribosome rescue factor SmrB (174 aa).

Positions 96-171 (LDLHGMNQQQ…GDSAILVLLD (76 aa)) constitute a Smr domain.

This sequence belongs to the SmrB family. In terms of assembly, associates with collided ribosomes, but not with correctly translating polysomes.

Its function is as follows. Acts as a ribosome collision sensor. Detects stalled/collided disomes (pairs of ribosomes where the leading ribosome is stalled and a second ribosome has collided with it) and endonucleolytically cleaves mRNA at the 5' boundary of the stalled ribosome. Stalled/collided disomes form a new interface (primarily via the 30S subunits) that binds SmrB. Cleaved mRNA becomes available for tmRNA ligation, leading to ribosomal subunit dissociation and rescue of stalled ribosomes. This Aeromonas hydrophila subsp. hydrophila (strain ATCC 7966 / DSM 30187 / BCRC 13018 / CCUG 14551 / JCM 1027 / KCTC 2358 / NCIMB 9240 / NCTC 8049) protein is Ribosome rescue factor SmrB.